The chain runs to 72 residues: Translation initiation factor IF-1 (72 aa).

The 72-residue stretch at 1 to 72 folds into the S1-like domain; the sequence is MAKEDTLEFP…SKGRINYRFK (72 aa).

This sequence belongs to the IF-1 family. In terms of assembly, component of the 30S ribosomal translation pre-initiation complex which assembles on the 30S ribosome in the order IF-2 and IF-3, IF-1 and N-formylmethionyl-tRNA(fMet); mRNA recruitment can occur at any time during PIC assembly.

It localises to the cytoplasm. One of the essential components for the initiation of protein synthesis. Stabilizes the binding of IF-2 and IF-3 on the 30S subunit to which N-formylmethionyl-tRNA(fMet) subsequently binds. Helps modulate mRNA selection, yielding the 30S pre-initiation complex (PIC). Upon addition of the 50S ribosomal subunit IF-1, IF-2 and IF-3 are released leaving the mature 70S translation initiation complex. This chain is Translation initiation factor IF-1, found in Cereibacter sphaeroides (strain ATCC 17029 / ATH 2.4.9) (Rhodobacter sphaeroides).